The sequence spans 735 residues: Serine/threonine-protein kinase BRSK2 (735 aa).

Residues 20-271 (YRLEKTLGKG…LEHIQKHIWY (252 aa)) form the Protein kinase domain. ATP is bound by residues 26–34 (LGKGQTGLV) and Lys-49. The active-site Proton acceptor is the Asp-142. Thr-175 is subject to Phosphothreonine; by LKB1. Position 261 is a phosphothreonine; by PKA (Thr-261). A Phosphoserine modification is found at Ser-295. The 43-residue stretch at 298–340 (DIDPDVLDSMHSLGCFRDRNKLLQDLLSEEENQEKMIYFLLLD) folds into the UBA domain. Residues 346 to 367 (PSHEDEDLPPRNEIDPPRKRVD) show a composition bias toward basic and acidic residues. 2 disordered regions span residues 346–476 (PSHE…GVPW) and 492–516 (RFHR…SSPE). Phosphoserine is present on residues Ser-368, Ser-383, Ser-394, Ser-413, Ser-424, and Ser-428. The segment covering 411–429 (SRSISGASSGLSTSPLSSP) has biased composition (low complexity). The segment covering 432–446 (TPHPSPRGSPLPTPK) has biased composition (pro residues). Ser-456 is modified (phosphoserine). A phosphothreonine mark is found at Thr-460, Thr-464, and Thr-510. Phosphoserine occurs at positions 513, 514, and 521. A KEN box motif is present at residues 604–606 (KEN). Residues 682 to 735 (KNGQAAQAPSTPAKRSAHGPLGDSAAAGPGGDTEYPMGKDMAKMGPPAARREQP) are disordered.

Belongs to the protein kinase superfamily. CAMK Ser/Thr protein kinase family. SNF1 subfamily. As to quaternary structure, interacts with FZR1, a regulatory subunit of the APC ubiquitin ligase complex. Interacts with COPS5. Interacts with PAK1. Requires Mg(2+) as cofactor. Post-translationally, may be phosphorylated at Thr-261 by PKA. Phosphorylated at Thr-175 by STK11/LKB1 in complex with STE20-related adapter-alpha (STRADA) pseudo kinase and CAB39. Not phosphorylated at Thr-175 by CaMKK2. In contrast, it is phosphorylated and activated by CaMKK1. May be inactivated via dephosphorylation of Thr-175 by PP2C. Polyubiquitinated by the APC complex in conjunction with FZR1, leading to its proteasomal degradation. Targeted for proteasomal degradation by interaction with COPS5. BRSK2 levels change during the cell cycle. BRSK2 levels are low at the G1/S boundary and gradually increase as cells progress into G2 phase. BRSK2 levels decrease rapidly at the end of mitosis. As to expression, detected in pancreas islets and in brain (at protein level). Detected in brain and pancreas.

It is found in the cytoplasm. Its subcellular location is the cytoskeleton. The protein localises to the microtubule organizing center. The protein resides in the centrosome. It localises to the perinuclear region. It is found in the endoplasmic reticulum. It carries out the reaction L-seryl-[protein] + ATP = O-phospho-L-seryl-[protein] + ADP + H(+). The enzyme catalyses L-threonyl-[protein] + ATP = O-phospho-L-threonyl-[protein] + ADP + H(+). The catalysed reaction is L-seryl-[tau protein] + ATP = O-phospho-L-seryl-[tau protein] + ADP + H(+). It catalyses the reaction L-threonyl-[tau protein] + ATP = O-phospho-L-threonyl-[tau protein] + ADP + H(+). With respect to regulation, activated by phosphorylation on Thr-175 by STK11/LKB1. Functionally, serine/threonine-protein kinase that plays a key role in polarization of neurons and axonogenesis, cell cycle progress and insulin secretion. Phosphorylates CDK16, CDC25C, MAPT/TAU, PAK1 and WEE1. Following phosphorylation and activation by STK11/LKB1, acts as a key regulator of polarization of cortical neurons, probably by mediating phosphorylation of microtubule-associated proteins such as MAPT/TAU at 'Thr-504' and 'Ser-554'. Also regulates neuron polarization by mediating phosphorylation of WEE1 at 'Ser-642' in post-mitotic neurons, leading to down-regulate WEE1 activity in polarized neurons. Plays a role in the regulation of the mitotic cell cycle progress and the onset of mitosis. Plays a role in the regulation of insulin secretion in response to elevated glucose levels, probably via phosphorylation of CDK16 and PAK1. While BRSK2 phosphorylated at Thr-175 can inhibit insulin secretion, BRSK2 phosphorylated at Thr-261 can promote insulin secretion. Regulates reorganization of the actin cytoskeleton. May play a role in the apoptotic response triggered by endoplasmic reticulum (ER) stress. The chain is Serine/threonine-protein kinase BRSK2 (Brsk2) from Mus musculus (Mouse).